Reading from the N-terminus, the 195-residue chain is Peptidyl-tRNA hydrolase (195 aa).

Tyrosine 17 is a tRNA binding site. Histidine 22 (proton acceptor) is an active-site residue. Residues tyrosine 68, asparagine 70, and asparagine 116 each contribute to the tRNA site.

Belongs to the PTH family. Monomer.

It localises to the cytoplasm. The enzyme catalyses an N-acyl-L-alpha-aminoacyl-tRNA + H2O = an N-acyl-L-amino acid + a tRNA + H(+). Its function is as follows. Hydrolyzes ribosome-free peptidyl-tRNAs (with 1 or more amino acids incorporated), which drop off the ribosome during protein synthesis, or as a result of ribosome stalling. Functionally, catalyzes the release of premature peptidyl moieties from peptidyl-tRNA molecules trapped in stalled 50S ribosomal subunits, and thus maintains levels of free tRNAs and 50S ribosomes. This chain is Peptidyl-tRNA hydrolase, found in Shewanella baltica (strain OS155 / ATCC BAA-1091).